The sequence spans 520 residues: Protein-export membrane protein SecD (520 aa).

The next 6 helical transmembrane spans lie at 10–30, 364–384, 391–411, 417–437, 461–481, and 483–503; these read IILL…PTLA, DSLL…FLRY, LPMI…AAGI, LSVI…LVII, FWVI…LAIL, and LGDL…GVLI.

This sequence belongs to the SecD/SecF family. SecD subfamily. In terms of assembly, part of the protein translocation apparatus. Forms a complex with SecF.

The protein resides in the cell membrane. Its function is as follows. Involved in protein export. The sequence is that of Protein-export membrane protein SecD from Haloquadratum walsbyi (strain DSM 16790 / HBSQ001).